A 398-amino-acid polypeptide reads, in one-letter code: Na(+)/H(+) antiporter NhaA 2 (398 aa).

A run of 11 helical transmembrane segments spans residues 17–37 (ILLM…LAGL), 59–79 (LLLW…GLEV), 95–115 (SLPT…YLGF), 125–145 (GWAI…ALLG), 154–174 (VFLL…IALF), 179–199 (LSIT…ILNL), 213–233 (LLLW…GVVI), 262–282 (FMIL…GMSL), 288–308 (PAAL…VLLF), 331–351 (AVAV…SLAF), and 364–384 (LGTL…LTKV).

The protein belongs to the NhaA Na(+)/H(+) (TC 2.A.33) antiporter family.

The protein localises to the cell inner membrane. The enzyme catalyses Na(+)(in) + 2 H(+)(out) = Na(+)(out) + 2 H(+)(in). Its function is as follows. Na(+)/H(+) antiporter that extrudes sodium in exchange for external protons. This Shewanella denitrificans (strain OS217 / ATCC BAA-1090 / DSM 15013) protein is Na(+)/H(+) antiporter NhaA 2.